Reading from the N-terminus, the 92-residue chain is uncharacterized protein (92 aa).

The region spanning 1 to 92 (MNGNKDAIFK…LKNLLKGWIE (92 aa)) is the HTH arsR-type domain. Positions 37–61 (IRLITKYDLSITRQAIAKHLSVLED) form a DNA-binding region, H-T-H motif.

This is an uncharacterized protein from Bacillus subtilis (strain 168).